Consider the following 154-residue polypeptide: NADPH-dependent 7-cyano-7-deazaguanine reductase (154 aa).

Cys-52 functions as the Thioimide intermediate in the catalytic mechanism. The Proton donor role is filled by Asp-59. Residues 74–76 (VES) and 93–94 (HE) each bind substrate.

It belongs to the GTP cyclohydrolase I family. QueF type 1 subfamily.

It localises to the cytoplasm. The catalysed reaction is 7-aminomethyl-7-carbaguanine + 2 NADP(+) = 7-cyano-7-deazaguanine + 2 NADPH + 3 H(+). It participates in tRNA modification; tRNA-queuosine biosynthesis. Functionally, catalyzes the NADPH-dependent reduction of 7-cyano-7-deazaguanine (preQ0) to 7-aminomethyl-7-deazaguanine (preQ1). The chain is NADPH-dependent 7-cyano-7-deazaguanine reductase from Sinorhizobium medicae (strain WSM419) (Ensifer medicae).